Reading from the N-terminus, the 392-residue chain is Zinc transporter zipt-7.1 (392 aa).

N-linked (GlcNAc...) asparagine glycosylation is present at Asn-63. Helical transmembrane passes span 82–102 and 114–134; these read VFSL…LFFI and ILLA…IIPH. Positions 139–162 are disordered; sequence HSHGAHDHDHAHSHDHAHNDHSHD. A compositionally biased stretch (basic and acidic residues) spans 142–162; it reads GAHDHDHAHSHDHAHNDHSHD. The chain crosses the membrane as a helical span at residues 170-190; it reads GIYVIAGILVFMMVEQLVRII. A glycan (N-linked (GlcNAc...) asparagine) is linked at Asn-248. 3 consecutive transmembrane segments (helical) span residues 255–275, 304–324, and 331–351; these read IGAS…TVLL, VTAL…NPVL, and GAIM…SVIP. Asn-361 carries N-linked (GlcNAc...) asparagine glycosylation. Residues 371–391 traverse the membrane as a helical segment; the sequence is SLVHLIAICMGVGMMYIVSLV.

This sequence belongs to the ZIP transporter (TC 2.A.5) family. KE4/Catsup subfamily.

The protein resides in the membrane. In terms of biological role, zinc transporter which regulates intracellular zinc levels. Required for spermatogenesis in both hermaphrodites and males where it resides in an inactive form in immature sperm, spermatids, but is likely activated in response to reduced spe-4 and spe-6 function. Upon activation, mediates the release of zinc from internal stores in spermatids into the cytoplasm. The resulting increase in cytoplasmic zinc levels promotes spermatid activation and subsequent differentiation into mature motile sperm that are capable of fertilization. This is Zinc transporter zipt-7.1 from Caenorhabditis briggsae.